A 138-amino-acid polypeptide reads, in one-letter code: Mini-ribonuclease 3 (138 aa).

The active site involves Asp-33.

Belongs to the MrnC RNase family. As to quaternary structure, homodimer. The cofactor is Mg(2+).

It localises to the cytoplasm. Functionally, involved in correct processing of both the 5' and 3' ends of 23S rRNA precursor. Processes 30S rRNA precursor transcript even in absence of ribonuclease 3 (Rnc); Rnc processes 30S rRNA into smaller rRNA precursors. The chain is Mini-ribonuclease 3 from Synechococcus sp. (strain ATCC 27144 / PCC 6301 / SAUG 1402/1) (Anacystis nidulans).